The chain runs to 308 residues: MSAQKPGLHPRNRHQHRYDLAALCQTTPELTSFLIRTPAGEQSVDFANPQAVKALNKALLAHFYAVTHWDIPPGFLCPPVPGRADYIHHLADLLGETTGSIPAQATILDVGVGANCIYPLIGVHEYGWRFTGSEVSDAAMSSAQAIIQANTGLSRAIRLRRQKDPAAIFTGIIHKNEFYDATLCNPPFHDSAAAARAGSERKRRNLGQNKDDALNFGGQQQELWCEGGEVAFIKKMIAESQTFRRQVLWFTTLVSRGENLPPLYRALTEAGAVKVVKKEMAQGQKQSRFIAWTFMGDDQRRRFITRKR.

This sequence belongs to the methyltransferase superfamily. METTL16/RlmF family.

The protein localises to the cytoplasm. The enzyme catalyses adenosine(1618) in 23S rRNA + S-adenosyl-L-methionine = N(6)-methyladenosine(1618) in 23S rRNA + S-adenosyl-L-homocysteine + H(+). Its function is as follows. Specifically methylates the adenine in position 1618 of 23S rRNA. The sequence is that of Ribosomal RNA large subunit methyltransferase F from Salmonella heidelberg (strain SL476).